A 251-amino-acid chain; its full sequence is UPF0309 protein SAV_3856 (251 aa).

The region spanning 36-220 is the SIS domain; sequence IADTVADGGR…AGTLADRGIE (185 aa).

This sequence belongs to the UPF0309 family.

This is UPF0309 protein SAV_3856 from Streptomyces avermitilis (strain ATCC 31267 / DSM 46492 / JCM 5070 / NBRC 14893 / NCIMB 12804 / NRRL 8165 / MA-4680).